Reading from the N-terminus, the 488-residue chain is Phenylalanine--tRNA ligase alpha subunit (488 aa).

Residues T332, 371–373, and F410 each bind L-phenylalanine; that span reads QLD. E412 provides a ligand contact to Mg(2+). Residue F435 participates in L-phenylalanine binding.

This sequence belongs to the class-II aminoacyl-tRNA synthetase family. Phe-tRNA synthetase alpha subunit type 2 subfamily. As to quaternary structure, tetramer of two alpha and two beta subunits. Mg(2+) is required as a cofactor.

Its subcellular location is the cytoplasm. It carries out the reaction tRNA(Phe) + L-phenylalanine + ATP = L-phenylalanyl-tRNA(Phe) + AMP + diphosphate + H(+). This Aeropyrum pernix (strain ATCC 700893 / DSM 11879 / JCM 9820 / NBRC 100138 / K1) protein is Phenylalanine--tRNA ligase alpha subunit.